Here is a 106-residue protein sequence, read N- to C-terminus: Large ribosomal subunit protein uL23 (106 aa).

The protein belongs to the universal ribosomal protein uL23 family. In terms of assembly, part of the 50S ribosomal subunit. Contacts protein L29, and trigger factor when it is bound to the ribosome.

In terms of biological role, one of the early assembly proteins it binds 23S rRNA. One of the proteins that surrounds the polypeptide exit tunnel on the outside of the ribosome. Forms the main docking site for trigger factor binding to the ribosome. This Acinetobacter baumannii (strain SDF) protein is Large ribosomal subunit protein uL23.